We begin with the raw amino-acid sequence, 445 residues long: MAITIVSVRARQIFDSRGNPTVEADVKLSDGYLARAAVPRGASTGIYEALELRDGGSDYLGKGVSKAVENVNIIIGPALVGKDPTDQVGIDNFMVQQLDGTVNEWGWCKQKLGANAILAVSLAVCKAGAHVKGIPLYKHVANLAGNKNLVLPVPAFNVINGGSHAGNKLAMQEFMILPVGASSFKEAMKMGAEVYHHLKSVIKKKYGQDATNVGDEGGFAPNIQENKEGLELLKTAIAKAGYTGKVVIGMDVAASEFYGSDKTYDLNFKEENNNGSQKISGDVLKDLYKSFVTEYPIVSIEDPFDQDDWEHYAKLTSEIGVKVQIVGDDLLVTNPKRVEKAIKEKACNALLLKVNQIGSVTESIEAVKMSKRAGWGVMASHRSGETEDTFIADLSVGLATGQIKTGAPCRSERLAKYNQLLRIEEELGAEAVYAGANFRTPVEPY.

The substrate site is built by His164 and Glu173. Glu216 functions as the Proton donor in the catalytic mechanism. 3 residues coordinate Mg(2+): Asp251, Glu301, and Asp328. Positions 301 and 328 each coordinate substrate. Lys353 acts as the Proton acceptor in catalysis. Residues 380–383 (SHRS) and Lys404 contribute to the substrate site.

The protein belongs to the enolase family. Homodimer. Mg(2+) serves as cofactor.

Its subcellular location is the cytoplasm. The enzyme catalyses (2R)-2-phosphoglycerate = phosphoenolpyruvate + H2O. It functions in the pathway carbohydrate degradation; glycolysis; pyruvate from D-glyceraldehyde 3-phosphate: step 4/5. The sequence is that of Enolase 2 (ENO2) from Hevea brasiliensis (Para rubber tree).